Reading from the N-terminus, the 135-residue chain is Protein PilG (135 aa).

The Response regulatory domain maps to 9–125; that stretch reads KVMVIDDSKT…ELLGAIKAHV (117 aa). D58 bears the 4-aspartylphosphate mark.

Phosphorylated.

Plays an essential role in both cAMP-dependent and independent regulation of twitching motility. Regulates the cAMP-independent coordination of type IV pilus (T4P) biogenesis and retraction that plays a role in surface and host cell adhesion, colonization, biofilm maturation, virulence, and twitching. In addition, phosphorylated PilG is necessary for cAMP production via regulation of the adenylate cyclase CyaB. Acts therefore as a response regulator of the chemosensory system/Chp system. This is Protein PilG (pilG) from Pseudomonas aeruginosa (strain ATCC 15692 / DSM 22644 / CIP 104116 / JCM 14847 / LMG 12228 / 1C / PRS 101 / PAO1).